The following is a 928-amino-acid chain: MALSFVFITCFMILLDTSQSCHTPDDFVAITSPGHIMIGGLFAIHEKMLSSDDHPRQPQIQKCVGFEISVFLQTLAMIHSIEMINNSSLLSGVKLGYEIYDTCTEVTAAMAATLRFLSKFNCSRETVIFQCDYSSYVPRVKAIIGAGYSEISMAVSRMLNLQLMPQVSYESTAEILSDKIRFPSFLRTVPSDFYQTKAMAHLIRQSGWNWVGAITTDDDYGRLALNTFAIQAAENNVCIAFKEVLPAFLSDNTIEVRINQTLEKIIAEAQVNVIVVFLRKFHVFNLFNKAIERKISKIWIASDNWSTAAKIITIPNVKKLGKVVGFTFRRGNMSSFHSFLQTLHMYPSDNNKPLHEFAMLFSACKHIKDGDLSQCISNYSQATWTYDTTKTIETHLFKRNDFLWHYTEPGLIHSIQLAVLALGHAIRDLCQDRDCQKPNAFQPWELLAVLKNVTFTDGKNSFHFDAHGDLNTGYEVVLWKETNGLMTVTKMAEYDLQHDVFITTNQETKHEFRKLKQILSKCSKECIPGQMKKATGSQHSCCYECVNCPENHYSNETDMDHCLVCNNETHWAPVRSTMCFEKEVEYLDWDDSLALLLIALSLLGIAFVLAVGIIFTRNLKTPVVKSSGGLVVCYVMLACHALNFASTGFFIGEPQDFTCKTRQTLFGVSFTLCVSCILTKSLKILLAFSFDPTLKTFLKCLYRPVPIVLTCTGIQVVICTLWLVLAAPTVEENTSLPRVIILECEEGSALAFGTMLGYIAVLAFICFVFAFKGRKLPENYNEAKFLTFGMLIYFIAWITFIPVYATTFGKYLPAVEIIVILISNYGILCCTFFPKCYIILCKQKTNTKSVFLQMVYNYSAHSVDSLALSHVSLDSASHSTATTNPRPGNKTAACQNYKHLPVQVLAHTGMEKTMHASKTLHQKRSSSI.

Residues 1 to 20 (MALSFVFITCFMILLDTSQS) form the signal peptide. At 21–594 (CHTPDDFVAI…EYLDWDDSLA (574 aa)) the chain is on the extracellular side. N-linked (GlcNAc...) asparagine glycosylation is found at Asn-332 and Asn-555. Residues 595–615 (LLLIALSLLGIAFVLAVGIIF) form a helical membrane-spanning segment. Residues 616–630 (TRNLKTPVVKSSGGL) lie on the Cytoplasmic side of the membrane. A helical membrane pass occupies residues 631 to 651 (VVCYVMLACHALNFASTGFFI). Over 652–669 (GEPQDFTCKTRQTLFGVS) the chain is Extracellular. The chain crosses the membrane as a helical span at residues 670-690 (FTLCVSCILTKSLKILLAFSF). Topologically, residues 691–706 (DPTLKTFLKCLYRPVP) are cytoplasmic. The helical transmembrane segment at 707 to 727 (IVLTCTGIQVVICTLWLVLAA) threads the bilayer. Over 728-750 (PTVEENTSLPRVIILECEEGSAL) the chain is Extracellular. Residues 751 to 771 (AFGTMLGYIAVLAFICFVFAF) traverse the membrane as a helical segment. Residues 772–784 (KGRKLPENYNEAK) lie on the Cytoplasmic side of the membrane. The chain crosses the membrane as a helical span at residues 785 to 805 (FLTFGMLIYFIAWITFIPVYA). Topologically, residues 806–812 (TTFGKYL) are extracellular. The chain crosses the membrane as a helical span at residues 813–833 (PAVEIIVILISNYGILCCTFF). Over 834–928 (PKCYIILCKQ…TLHQKRSSSI (95 aa)) the chain is Cytoplasmic.

It belongs to the G-protein coupled receptor 3 family. As to quaternary structure, homodimer; disulfide-linked. In terms of processing, N-glycosylated. As to expression, high expression in soft palate. Weak expression in kidney, liver, lung and brain. No expression detected in heart, testis, skeletal muscle amd spleen.

It is found in the cell membrane. In terms of biological role, receptor activated by multiple ligands, including osteocalcin (BGLAP), basic amino acids, and various cations. Activated by amino acids with a preference for basic amino acids such as L-Lys, L-Arg and L-ornithine but also by small and polar amino acids. The L-alpha amino acids respond is augmented by divalent cations Ca(2+) and Mg(2+). Seems to act through a G(q)/G(11) and G(i)-coupled pathway. Regulates testosterone production by acting as a ligand for uncarboxylated osteocalcin hormone: osteocalcin-binding at the surface of Leydig cells initiates a signaling response that promotes the expression of enzymes required for testosterone synthesis in a CREB-dependent manner. Mediates the non-genomic effects of androgens in multiple tissue. May coordinate nutritional and hormonal anabolic signals through the sensing of extracellular amino acids, osteocalcin, divalent ions and its responsiveness to anabolic steroids. The protein is G-protein coupled receptor family C group 6 member A (Gprc6a) of Rattus norvegicus (Rat).